The sequence spans 439 residues: MVMDKLGSSLQDALKKLVGAGRIDEKTVTEVVKDIQRALLQADVNVKLVMQMSSHIKERALKEEVPPGMNPREHVIKIVYQELISIVGRSADIPLKPQTIMMIGLQGSGKTTTTSKLSRYFQRKGLKPAVICADTFRPGAYQQLKTLCDKLNVPFYGEVGNPDAVGIVERGLAELGKNDVLIVDTAGRHSLEADLIDEMEQIHEIAQPDYKLLVLDGAIGQQASEQARAFNDSVGISGVVISKLDGTAKGGGALSAVSETNSAIAFIGVGETPDDLEKFEPDRFISRLLGMGDIKSLIEKAEETLSEEDIDMEAMMRGRFTLKDMYSQLEAMNKMGPMKQIMQMLPLGGMGAKLSDDAYKVTEDKMKGYRVLMDSMTEEELLNPRLLGSSRIKRISLGSGSSPDAVRELLKYYKMMQNAMKGLRGGKFNIQKMMKKMGM.

GTP-binding positions include 104–111 (GLQGSGKT), 184–188 (DTAGR), and 242–245 (SKLD).

The protein belongs to the GTP-binding SRP family. SRP54 subfamily. As to quaternary structure, part of the signal recognition particle protein translocation system, which is composed of SRP and FtsY. Archaeal SRP consists of a 7S RNA molecule of 300 nucleotides and two protein subunits: SRP54 and SRP19.

The protein localises to the cytoplasm. The catalysed reaction is GTP + H2O = GDP + phosphate + H(+). Involved in targeting and insertion of nascent membrane proteins into the cytoplasmic membrane. Binds to the hydrophobic signal sequence of the ribosome-nascent chain (RNC) as it emerges from the ribosomes. The SRP-RNC complex is then targeted to the cytoplasmic membrane where it interacts with the SRP receptor FtsY. In Methanococcoides burtonii (strain DSM 6242 / NBRC 107633 / OCM 468 / ACE-M), this protein is Signal recognition particle 54 kDa protein.